The chain runs to 462 residues: uncharacterized protein (462 aa).

The next 2 membrane-spanning stretches (helical) occupy residues 12-32 and 257-277; these read WWWL…APTV and GLCV…LELV.

It belongs to the HHV-5 US29 protein family.

The protein localises to the host membrane. This is an uncharacterized protein from Homo sapiens (Human).